The chain runs to 175 residues: Interleukin-10 (175 aa).

An N-terminal signal peptide occupies residues 1-18; it reads MPSSALLYCLIFLAGVAA. 2 disulfide bridges follow: Cys26/Cys122 and Cys76/Cys128. An N-linked (GlcNAc...) asparagine glycan is attached at Asn130.

The protein belongs to the IL-10 family. As to quaternary structure, homodimer. Interacts with IL10RA and IL10RB.

The protein resides in the secreted. Functionally, major immune regulatory cytokine that acts on many cells of the immune system where it has profound anti-inflammatory functions, limiting excessive tissue disruption caused by inflammation. Mechanistically, IL10 binds to its heterotetrameric receptor comprising IL10RA and IL10RB leading to JAK1 and STAT2-mediated phosphorylation of STAT3. In turn, STAT3 translocates to the nucleus where it drives expression of anti-inflammatory mediators. Targets antigen-presenting cells (APCs) such as macrophages and monocytes and inhibits their release of pro-inflammatory cytokines including granulocyte-macrophage colony-stimulating factor /GM-CSF, granulocyte colony-stimulating factor/G-CSF, IL-1 alpha, IL-1 beta, IL-6, IL-8 and TNF-alpha. Also interferes with antigen presentation by reducing the expression of MHC-class II and co-stimulatory molecules, thereby inhibiting their ability to induce T cell activation. In addition, controls the inflammatory response of macrophages by reprogramming essential metabolic pathways including mTOR signaling. This chain is Interleukin-10 (IL10), found in Sus scrofa (Pig).